The sequence spans 974 residues: Ephrin type-B receptor 3 (974 aa).

The N-terminal stretch at 1 to 16 (MLPAVFVILALSAVQG) is a signal peptide. Residues 17-534 (LEETLMDTKW…RSSLQEQVPM (518 aa)) are Extracellular-facing. Residues 18–196 (EETLMDTKWT…FFKKCPRTTA (179 aa)) enclose the Eph LBD domain. Cys-60 and Cys-178 are disulfide-bonded. 2 consecutive Fibronectin type-III domains span residues 318 to 426 (VPSA…TNQA) and 427 to 522 (APSS…IAED). N-linked (GlcNAc...) asparagine glycans are attached at residues Asn-330 and Asn-420. A helical membrane pass occupies residues 535 to 555 (VVGSVTAGLIFIIAVVIIVIV). Residues 556 to 974 (CFSRKQRNDS…QMSQTLPVQV (419 aa)) are Cytoplasmic-facing. Tyr-590 is subject to Phosphotyrosine; by autocatalysis. Residues 609 to 872 (VKIEEVIGAG…QIVSSLDKLI (264 aa)) enclose the Protein kinase domain. ATP contacts are provided by residues 615-623 (IGAGEFGEV) and Lys-641. The active-site Proton acceptor is the Asp-734. The region spanning 901 to 965 (TTFPTVSDWL…LNSVQDMRLQ (65 aa)) is the SAM domain. The PDZ-binding motif lies at 972–974 (VQV).

This sequence belongs to the protein kinase superfamily. Tyr protein kinase family. Ephrin receptor subfamily. As to quaternary structure, heterotetramer upon binding of the ligand. The heterotetramer is composed of an ephrin dimer and a receptor dimer. Oligomerization is probably required to induce biological responses. Phosphorylated. Autophosphorylates upon ligand-binding. Autophosphorylation on Tyr-590 is required for interaction with SH2 domain-containing proteins. Expressed in the embryo in pre-somitic mesoderm, caudal somites, midbrain, and cement gland. Most abundant in adult brain, eye, heart, lung and ovary. Lower levels in intestine, kidney, oviduct and pharynx.

It localises to the cell membrane. The protein localises to the cell projection. The protein resides in the dendrite. It catalyses the reaction L-tyrosyl-[protein] + ATP = O-phospho-L-tyrosyl-[protein] + ADP + H(+). Receptor tyrosine kinase which binds promiscuously transmembrane ephrin-B family ligands residing on adjacent cells, leading to contact-dependent bidirectional signaling into neighboring cells. The signaling pathway downstream of the receptor is referred to as forward signaling while the signaling pathway downstream of the ephrin ligand is referred to as reverse signaling. Generally has an overlapping and redundant function with EPHB2. Like EPHB2, functions in axon guidance during development. In addition to its role in axon guidance also plays an important redundant role with other ephrin-B receptors in development and maturation of dendritic spines and the formation of excitatory synapses. May control other aspects of development through regulation of cell migration and positioning. This chain is Ephrin type-B receptor 3 (ephb3), found in Xenopus laevis (African clawed frog).